Consider the following 515-residue polypeptide: 2,3-bisphosphoglycerate-independent phosphoglycerate mutase (515 aa).

Residues Asp14 and Ser64 each contribute to the Mn(2+) site. The Phosphoserine intermediate role is filled by Ser64. Substrate is bound by residues His125, Arg155 to Asp156, Arg187, Arg193, Arg263 to Arg266, and Lys337. The Mn(2+) site is built by Asp404, His408, Asp445, His446, and His464.

It belongs to the BPG-independent phosphoglycerate mutase family. Monomer. Mn(2+) serves as cofactor.

It carries out the reaction (2R)-2-phosphoglycerate = (2R)-3-phosphoglycerate. It participates in carbohydrate degradation; glycolysis; pyruvate from D-glyceraldehyde 3-phosphate: step 3/5. Its function is as follows. Catalyzes the interconversion of 2-phosphoglycerate and 3-phosphoglycerate. In Pseudomonas aeruginosa (strain UCBPP-PA14), this protein is 2,3-bisphosphoglycerate-independent phosphoglycerate mutase.